A 103-amino-acid polypeptide reads, in one-letter code: Small ribosomal subunit protein uS10 (103 aa).

This sequence belongs to the universal ribosomal protein uS10 family. As to quaternary structure, part of the 30S ribosomal subunit.

Functionally, involved in the binding of tRNA to the ribosomes. This is Small ribosomal subunit protein uS10 from Nitratiruptor sp. (strain SB155-2).